A 757-amino-acid chain; its full sequence is Mitofusin-2 (757 aa).

Over 1–604 (MSLLFSRCNS…TQEEFMVSMV (604 aa)) the chain is Cytoplasmic. The interval 30 to 94 (KHFVTAKKKI…VRGISEVLAR (65 aa)) is part of a helix bundle domain, formed by helices from N-terminal and C-terminal regions. In terms of domain architecture, Dynamin-type G spans 93 to 342 (ARRHMKVAFF…VRMFEFQNFE (250 aa)). Residues 103 to 110 (GRTSNGKS) are G1 motif. 106–111 (SNGKST) is a GTP binding site. Position 111 is a phosphothreonine; by PINK1 (threonine 111). A G2 motif region spans residues 129-130 (TT). Residues 199–202 (DSPG) are G3 motif. Residue 258–261 (NRWD) coordinates GTP. Residues 258-261 (NRWD) are G4 motif. Glutamate 288 is a region of interest (G5 motif). Residues serine 305 and lysine 307 each coordinate GTP. Positions 359-385 (EQHTVRAKQIAEAVRLIMDSLHMAARE) are part of a helix bundle domain, formed by helices from N-terminal and C-terminal regions. Positions 391–434 (EEMREERQDRLKFIDKQLELLAQDYKLRIKQITEEVERQVSTAM) form a coiled coil. At serine 442 the chain carries Phosphoserine; by PINK1. Residues 605–625 (TGLASLTSRTSMGILVVGGVV) form a helical membrane-spanning segment. Residue tryptophan 626 is a topological domain, mitochondrial intermembrane. Residues 627 to 647 (KAVGWRLIALSFGLYGLLYVY) form a helical membrane-spanning segment. The Cytoplasmic portion of the chain corresponds to 648 to 757 (ERLTWTTKAK…FTHQYLQPSR (110 aa)). The stretch at 695-738 (TFAHLCQQVDVTRENLEQEIAAMNKKIEVLDSLQSKAKLLRNKA) forms a coiled coil. Residues 722–753 (EVLDSLQSKAKLLRNKAGWLDSELNMFTHQYL) are part of a helix bundle domain, formed by helices from N-terminal and C-terminal regions.

Belongs to the TRAFAC class dynamin-like GTPase superfamily. Dynamin/Fzo/YdjA family. Mitofusin subfamily. Forms homomultimers and heteromultimers with MFN1. Oligomerization is essential for mitochondrion fusion. Interacts with VAT1. Interacts with STOML2; may form heterooligomers. Interacts (phosphorylated) with PRKN. Interacts with EIF2AK3. Interacts with THG1L; THG1L probably functions as a guanyl-nucleotide exchange factor/GEF, activating MFN2. In terms of processing, phosphorylated by PINK1. Ubiquitinated by non-degradative ubiquitin by PRKN, promoting mitochondrial fusion; deubiquitination by USP30 inhibits mitochondrial fusion. Ubiquitinated by HUWE1 when dietary stearate (C18:0) levels are low; ubiquitination inhibits mitochondrial fusion. As to expression, ubiquitous; expressed at low level. Highly expressed in heart and kidney.

The protein resides in the mitochondrion outer membrane. The catalysed reaction is GTP + H2O = GDP + phosphate + H(+). In terms of biological role, mitochondrial outer membrane GTPase that mediates mitochondrial clustering and fusion. Mitochondria are highly dynamic organelles, and their morphology is determined by the equilibrium between mitochondrial fusion and fission events. Overexpression induces the formation of mitochondrial networks. Membrane clustering requires GTPase activity and may involve a major rearrangement of the coiled coil domains. Plays a central role in mitochondrial metabolism and may be associated with obesity and/or apoptosis processes. Plays an important role in the regulation of vascular smooth muscle cell proliferation. Involved in the clearance of damaged mitochondria via selective autophagy (mitophagy). Is required for PRKN recruitment to dysfunctional mitochondria. Involved in the control of unfolded protein response (UPR) upon ER stress including activation of apoptosis and autophagy during ER stress. Acts as an upstream regulator of EIF2AK3 and suppresses EIF2AK3 activation under basal conditions. The chain is Mitofusin-2 from Homo sapiens (Human).